The following is a 391-amino-acid chain: Inner membrane protein YdcO (391 aa).

The Cytoplasmic segment spans residues 1–9 (MRLFSIPPP). Residues 10-30 (TLLAGFLAVLIGYASSAAIIW) traverse the membrane as a helical segment. Over 31–42 (QAAIVAGATTAQ) the chain is Periplasmic. The chain crosses the membrane as a helical span at residues 43–63 (ISGWMTALGLAMGVSTLTLTL). At 64–93 (WYRVPVLTAWSTPGAALLVTGLQGLTLNEA) the chain is on the cytoplasmic side. A helical transmembrane segment spans residues 94–114 (IGVFIVTNALIVLCGITGLFA). Residues 115–123 (RLMRIIPHS) are Periplasmic-facing. The chain crosses the membrane as a helical span at residues 124-144 (LAAAMLAGILLRFGLQAFASL). The Cytoplasmic segment spans residues 145-167 (DGQFTLCGSMLLVWLATKAVAPR). A helical membrane pass occupies residues 168–188 (YAVIAAMIIGIVIVIAQGDVV). The Periplasmic portion of the chain corresponds to 189-200 (TTDVVFKPVLPT). Residues 201 to 221 (YITPDFSFAHSLSVALPLFLV) form a helical membrane-spanning segment. Residues 222-246 (TMASQNAPGIAAMKAAGYSAPVSPL) lie on the Cytoplasmic side of the membrane. Residues 247–267 (IVFTGLLALVFSPFGVYSVGI) traverse the membrane as a helical segment. The Periplasmic portion of the chain corresponds to 268–287 (AAITAAICQSPEAHPDKDQR). A helical transmembrane segment spans residues 288 to 308 (WLAAAVAGIFYLLAGLFGSAI). At 309–311 (TGM) the chain is on the cytoplasmic side. The chain crosses the membrane as a helical span at residues 312-332 (MAALPVSWIQMLAGLALLSTI). At 333–361 (GGSLYQALHNERERDAAVVAFLVTASGLT) the chain is on the periplasmic side. A helical membrane pass occupies residues 362-382 (LVGIGSAFWGLIAGGVCYVVL). The Cytoplasmic segment spans residues 383–391 (NLIADRNRY).

The protein localises to the cell inner membrane. The chain is Inner membrane protein YdcO (ydcO) from Escherichia coli (strain K12).